The primary structure comprises 504 residues: Cytochrome P450 monooxygenase gliF (504 aa).

The chain crosses the membrane as a helical span at residues 13-31; that stretch reads AVAVSFGVGLLYWVYRLLL. N-linked (GlcNAc...) asparagine glycans are attached at residues N197 and N299. C449 contacts heme.

The protein belongs to the cytochrome P450 family. Heme serves as cofactor.

It is found in the membrane. It participates in mycotoxin biosynthesis. Cytochrome P450 monooxygenase; part of the gene cluster that mediates the biosynthesis of gliotoxin, a member of the epipolythiodioxopiperazine (ETP) class of toxins characterized by a disulfide bridged cyclic dipeptide. The first step in gliotoxin biosynthesis is the condensation of serine and phenylalanine to form the cyclo-L-phenylalanyl-L-serine diketopiperazine (DKP) by the NRPS gliP. GliP is also able to produce the DKP cyclo-L-tryptophanyl-L-serine, suggesting that the substrate specificity of the first adenylation (A) domain in gliP is sufficiently relaxed to accommodate both L-Phe and L-Trp. The cytochrome P450 monooxygenase gliC has been shown to catalyze the subsequent hydroxylation of the alpha-carbon of L-Phe in cyclo-L-phenylalanyl-L-serine whereas the second cytochrome P450 enzyme, gliF, is presumably involved in the modification of the DKP side chain. The glutathione S-transferase (GST) gliG then forms a bis-glutathionylated biosynthetic intermediate which is responsible for the sulfurization of gliotoxin. This bis-glutathionylated intermediate is subsequently processed by the gamma-glutamyl cyclotransferase gliK to remove both gamma-glutamyl moieties. Subsequent processing via gliI yields a biosynthetic intermediate, which is N-methylated via the N-methyltransferase gliN, before the gliotoxin oxidoreductase gliT-mediated disulfide bridge closure. GliN-mediated amide methylation confers stability to ETP, damping the spontaneous formation of tri- and tetrasulfides. Intracellular dithiol gliotoxin oxidized by gliT is subsequently effluxed by gliA. Gliotoxin contributes to pathogenesis during invasive aspergillosis. In macrophages and neutrophils, gliotoxin showed inhibition of various different cell functions including cytokine production, antigen presentation, phagocytosis, and production of reactive oxygen species. The chain is Cytochrome P450 monooxygenase gliF from Aspergillus fumigatus (strain ATCC MYA-4609 / CBS 101355 / FGSC A1100 / Af293) (Neosartorya fumigata).